A 564-amino-acid chain; its full sequence is Septation ring formation regulator EzrA (564 aa).

Residues M1 to F4 are Extracellular-facing. The chain crosses the membrane as a helical span at residues I5–M23. At R24–E564 the chain is on the cytoplasmic side. Coiled coils occupy residues V84 to T126, E165 to E223, M271 to K303, and V350 to L435.

It belongs to the EzrA family.

It localises to the cell membrane. In terms of biological role, negative regulator of FtsZ ring formation; modulates the frequency and position of FtsZ ring formation. Inhibits FtsZ ring formation at polar sites. Interacts either with FtsZ or with one of its binding partners to promote depolymerization. This is Septation ring formation regulator EzrA from Staphylococcus epidermidis (strain ATCC 12228 / FDA PCI 1200).